Reading from the N-terminus, the 373-residue chain is Queuine tRNA-ribosyltransferase (373 aa).

Aspartate 89 (proton acceptor) is an active-site residue. Residues 89 to 93 (DSGGF), aspartate 143, glutamine 185, and glycine 212 each bind substrate. Residues 243 to 249 (GVGRPED) form an RNA binding region. Aspartate 262 functions as the Nucleophile in the catalytic mechanism. The tract at residues 267–271 (TRNAR) is RNA binding; important for wobble base 34 recognition. 4 residues coordinate Zn(2+): cysteine 300, cysteine 302, cysteine 305, and histidine 331.

The protein belongs to the queuine tRNA-ribosyltransferase family. In terms of assembly, homodimer. Within each dimer, one monomer is responsible for RNA recognition and catalysis, while the other monomer binds to the replacement base PreQ1. Zn(2+) is required as a cofactor.

The enzyme catalyses 7-aminomethyl-7-carbaguanine + guanosine(34) in tRNA = 7-aminomethyl-7-carbaguanosine(34) in tRNA + guanine. It participates in tRNA modification; tRNA-queuosine biosynthesis. Functionally, catalyzes the base-exchange of a guanine (G) residue with the queuine precursor 7-aminomethyl-7-deazaguanine (PreQ1) at position 34 (anticodon wobble position) in tRNAs with GU(N) anticodons (tRNA-Asp, -Asn, -His and -Tyr). Catalysis occurs through a double-displacement mechanism. The nucleophile active site attacks the C1' of nucleotide 34 to detach the guanine base from the RNA, forming a covalent enzyme-RNA intermediate. The proton acceptor active site deprotonates the incoming PreQ1, allowing a nucleophilic attack on the C1' of the ribose to form the product. After dissociation, two additional enzymatic reactions on the tRNA convert PreQ1 to queuine (Q), resulting in the hypermodified nucleoside queuosine (7-(((4,5-cis-dihydroxy-2-cyclopenten-1-yl)amino)methyl)-7-deazaguanosine). In Marinobacter nauticus (strain ATCC 700491 / DSM 11845 / VT8) (Marinobacter aquaeolei), this protein is Queuine tRNA-ribosyltransferase.